A 156-amino-acid chain; its full sequence is Myosin regulatory light chain, striated adductor muscle (156 aa).

Blocked amino end (Ala) is present on Ala-1. 2 consecutive EF-hand domains span residues 15–50 and 84–119; these read KQIQ…LGRT and DSEE…MGDN. Ca(2+) is bound by residues Asp-28, Asp-30, Asp-32, and Asp-39.

Functionally, in molluscan muscle, calcium regulation is associated with myosin rather than with actin. Muscle myosin contains two types of light chains: the catalytic light chain, essential for ATPase activity, and the regulatory light chain, a calcium-binding protein responsible for Ca(2+) dependent binding and Ca(2+) dependent Mg-ATPase activity. In Chlamys nipponensis akazara (Akazara scallop), this protein is Myosin regulatory light chain, striated adductor muscle.